Reading from the N-terminus, the 199-residue chain is Peptidyl-prolyl cis-trans isomerase CYP22 (199 aa).

The PPIase cyclophilin-type domain maps to 35-198; that stretch reads FFDVSIGGIP…LAVVITECGE (164 aa).

Belongs to the cyclophilin-type PPIase family. As to expression, ubiquitous.

The catalysed reaction is [protein]-peptidylproline (omega=180) = [protein]-peptidylproline (omega=0). Functionally, PPIases accelerate the folding of proteins. It catalyzes the cis-trans isomerization of proline imidic peptide bonds in oligopeptides. The polypeptide is Peptidyl-prolyl cis-trans isomerase CYP22 (CYP22) (Arabidopsis thaliana (Mouse-ear cress)).